The sequence spans 232 residues: Ribonuclease P protein component 3 (232 aa).

The protein belongs to the eukaryotic/archaeal RNase P protein component 3 family. Consists of a catalytic RNA component and at least 4-5 protein subunits.

The protein localises to the cytoplasm. The enzyme catalyses Endonucleolytic cleavage of RNA, removing 5'-extranucleotides from tRNA precursor.. Its function is as follows. Part of ribonuclease P, a protein complex that generates mature tRNA molecules by cleaving their 5'-ends. The chain is Ribonuclease P protein component 3 from Methanococcus maripaludis (strain C6 / ATCC BAA-1332).